The following is a 517-amino-acid chain: Crotonobetaine/carnitine--CoA ligase (517 aa).

Belongs to the ATP-dependent AMP-binding enzyme family.

The enzyme catalyses 4-(trimethylamino)butanoate + ATP + CoA = 4-(trimethylamino)butanoyl-CoA + AMP + diphosphate. The catalysed reaction is crotonobetaine + ATP + CoA = crotonobetainyl-CoA + AMP + diphosphate. It catalyses the reaction (R)-carnitine + ATP + CoA = (R)-carnitinyl-CoA + AMP + diphosphate. Its pathway is amine and polyamine metabolism; carnitine metabolism. Catalyzes the transfer of CoA to carnitine, generating the initial carnitinyl-CoA needed for the CaiB reaction cycle. Also has activity toward crotonobetaine and gamma-butyrobetaine. This chain is Crotonobetaine/carnitine--CoA ligase, found in Escherichia coli (strain SE11).